Reading from the N-terminus, the 434-residue chain is ATP phosphoribosyltransferase regulatory subunit (434 aa).

Residues 1 to 48 (MYGRGSGAEHSRGSGAEHFWDPRPEASSTVSSSLRPPSGARDLLPREV) form a disordered region. Residues 27-38 (SSTVSSSLRPPS) show a composition bias toward low complexity.

It belongs to the class-II aminoacyl-tRNA synthetase family. HisZ subfamily. Heteromultimer composed of HisG and HisZ subunits.

The protein localises to the cytoplasm. It functions in the pathway amino-acid biosynthesis; L-histidine biosynthesis; L-histidine from 5-phospho-alpha-D-ribose 1-diphosphate: step 1/9. In terms of biological role, required for the first step of histidine biosynthesis. May allow the feedback regulation of ATP phosphoribosyltransferase activity by histidine. The polypeptide is ATP phosphoribosyltransferase regulatory subunit (Synechococcus sp. (strain JA-2-3B'a(2-13)) (Cyanobacteria bacterium Yellowstone B-Prime)).